The primary structure comprises 57 residues: Small hydrophobic protein (57 aa).

Residues 1 to 8 lie on the Virion surface side of the membrane; it reads MPAIQPPL. Residues 9–29 form a helical membrane-spanning segment; the sequence is YLTFLLLILLYLIITLYVWTI. The Intravirion segment spans residues 30-57; sequence LTITYKTTVRYAALYQRSFSRWGFDQSL.

This sequence belongs to the rubulavirus small hydrophobic protein family. In terms of assembly, interacts with host TNFRSF1A, RIPK1 and IRAK1; these interactions interfere with host NF-kappa-B activation at the level of receptor complexes. Interacts with host protein UBQLN4.

Its subcellular location is the virion membrane. It localises to the host cell membrane. Plays a role in the inhibition of the host NF-kappa-B pathway. This inhibition occurs at the receptor level, by preventing the signaling of TNFR1 as well as IL-1R and TLR3. The chain is Small hydrophobic protein (SH) from Homo sapiens (Human).